The chain runs to 374 residues: uncharacterized protein (374 aa).

The protein belongs to the mimivirus L41 family.

This is an uncharacterized protein from Acanthamoeba polyphaga (Amoeba).